Here is a 313-residue protein sequence, read N- to C-terminus: Protoheme IX farnesyltransferase (313 aa).

Helical transmembrane passes span 35 to 55 (LVVF…HPVL), 56 to 76 (AATS…LNMW), 98 to 118 (VSSP…VATL), 120 to 140 (VLVN…YAVV), 153 to 173 (IVIG…AATG), 180 to 200 (IILF…LALF), 226 to 246 (ILLY…LGYF), 248 to 268 (AAYG…AFNV), and 292 to 312 (LFLL…AAMI).

This sequence belongs to the UbiA prenyltransferase family. Protoheme IX farnesyltransferase subfamily.

It is found in the cell inner membrane. It carries out the reaction heme b + (2E,6E)-farnesyl diphosphate + H2O = Fe(II)-heme o + diphosphate. The protein operates within porphyrin-containing compound metabolism; heme O biosynthesis; heme O from protoheme: step 1/1. Its function is as follows. Converts heme B (protoheme IX) to heme O by substitution of the vinyl group on carbon 2 of heme B porphyrin ring with a hydroxyethyl farnesyl side group. The sequence is that of Protoheme IX farnesyltransferase from Afipia carboxidovorans (strain ATCC 49405 / DSM 1227 / KCTC 32145 / OM5) (Oligotropha carboxidovorans).